We begin with the raw amino-acid sequence, 329 residues long: MAKLQAITLSGIGKNGDVTLNLNPRGVNPTNGVAALSEAGAVPALEKRVTISVSQPSRNRKNYKVQVKIQNPTSCTASGTCDPSVTRSAYADVTFSFTQYSTDEERALVRTELKALLADPMLIDAIDNLNPAYWTALLGDGSGPSPVPGPNPDPPLEPPPGTGSYTCPFRIWDLSSIYEAANSSHSWDIYNAVELSPRKFDVTLDDLLGNTDWRDWDGRLRYTTFRGSRGNGYIDLDATSLMQDEYLTSSKYLVREGKRPGAFGSIERFVYLKSINAYCSLSDITAYHSDGVVVGFWRDPSSGGAIPFDFSEFDSNKCPIQAVIVVPRL.

Residues 143–162 are disordered; the sequence is GPSPVPGPNPDPPLEPPPGT. Residues 145–161 show a composition bias toward pro residues; the sequence is SPVPGPNPDPPLEPPPG.

The protein resides in the virion. In terms of biological role, minor capsid protein. In Qbeta virus (strain MX1), this protein is Minor capsid protein A1.